Consider the following 183-residue polypeptide: MTTASTSQVRQNYHQDSEAAINRQINLELYASYVYLSMSYYFDRDDVALKNFAKYFLHQSHEEREHAEKLMKLQNQRGGRIFLQDIKKPDCDDWESGLNAMECALHLEKNVNQSLLELHKLATDKNDPHLCDFIETHYLNEQVKAIKELGDHVTNLRKMGAPESGLAEYLFDKHTLGDSDNES.

Met1 carries the N-acetylmethionine modification. Residue Thr2 is modified to N-acetylthreonine; in Ferritin heavy chain, N-terminally processed. A Ferritin-like diiron domain is found at 11–160; that stretch reads QNYHQDSEAA…DHVTNLRKMG (150 aa). The Fe cation site is built by Glu28, Glu63, His66, Glu108, and Gln142. Residues Ser179 and Ser183 each carry the phosphoserine modification.

Belongs to the ferritin family. In terms of assembly, oligomer of 24 subunits. There are two types of subunits: L (light) chain and H (heavy) chain. The major chain can be light or heavy, depending on the species and tissue type. In the human liver, the heavy chain is predominant. The functional molecule forms a roughly spherical shell with a diameter of 12 nm and contains a central cavity into which the insoluble mineral iron core is deposited. Interacts with NCOA4; NCOA4 promotes targeting of the iron-binding ferritin complex to autolysosomes following starvation or iron depletion. Expressed in the liver.

The protein localises to the cytoplasm. It is found in the lysosome. The protein resides in the cytoplasmic vesicle. Its subcellular location is the autophagosome. It carries out the reaction 4 Fe(2+) + O2 + 4 H(+) = 4 Fe(3+) + 2 H2O. Its function is as follows. Stores iron in a soluble, non-toxic, readily available form. Important for iron homeostasis. Has ferroxidase activity. Iron is taken up in the ferrous form and deposited as ferric hydroxides after oxidation. Also plays a role in delivery of iron to cells. Mediates iron uptake in capsule cells of the developing kidney. Delivery to lysosomes is mediated by the cargo receptor NCOA4 for autophagic degradation and release of iron. The chain is Ferritin heavy chain (FTH1) from Homo sapiens (Human).